We begin with the raw amino-acid sequence, 62 residues long: Conotoxin Pl168 (62 aa).

An N-terminal signal peptide occupies residues 1-21 (MGMRMMFTVFLLVVLATTVVS). Positions 22–40 (FTLDRASDGANAAADLVAR) are excised as a propeptide. Disulfide bonds link cysteine 46/cysteine 52 and cysteine 47/cysteine 61.

It belongs to the conotoxin A superfamily. In terms of processing, both Pro-53 and Pro-62 are not in cis/trans isomerization. Expressed by the venom duct.

Its subcellular location is the secreted. Functionally, probable neurotoxin with unknown target. Possibly targets ion channels. In Conus planorbis (Planorbis cone), this protein is Conotoxin Pl168.